The chain runs to 165 residues: uncharacterized protein (165 aa).

Residues 20–40 (INLIASIVLWLLFVITVIGTF) traverse the membrane as a helical segment. Asn-51 carries N-linked (GlcNAc...) asparagine; by host glycosylation. The chain crosses the membrane as a helical span at residues 97–117 (VGIIVILIFMLMIIMNGFYQM).

Its subcellular location is the membrane. This is an uncharacterized protein from Acanthamoeba polyphaga (Amoeba).